Reading from the N-terminus, the 114-residue chain is MQQAKAIARYVRISPRKVRQVVDLIRGKNVSDALAILQFTPKGATEPVTKVLNSAVANAEHNYDMDTDALIVKEIYVDEGPTLKRIKPRAMGRADQIRKRTSHITVVVVEKKEG.

This sequence belongs to the universal ribosomal protein uL22 family. Part of the 50S ribosomal subunit.

Its function is as follows. This protein binds specifically to 23S rRNA; its binding is stimulated by other ribosomal proteins, e.g. L4, L17, and L20. It is important during the early stages of 50S assembly. It makes multiple contacts with different domains of the 23S rRNA in the assembled 50S subunit and ribosome. Functionally, the globular domain of the protein is located near the polypeptide exit tunnel on the outside of the subunit, while an extended beta-hairpin is found that lines the wall of the exit tunnel in the center of the 70S ribosome. In Desulfitobacterium hafniense (strain DSM 10664 / DCB-2), this protein is Large ribosomal subunit protein uL22.